Reading from the N-terminus, the 583-residue chain is Glucosidase 2 subunit beta (583 aa).

The first 26 residues, 1–26 (MVRLNLAVVALAAGALSASASASSSA), serve as a signal peptide directing secretion. A disulfide bridge links Cys91 with Cys115. Residues 130–252 (NRCEKVGKEY…LTLLLDDLAK (123 aa)) adopt a coiled-coil conformation. The MRH domain occupies 455–562 (NKCFSKDMGE…KVATPAVCFP (108 aa)). Cystine bridges form between Cys457–Cys470, Cys519–Cys548, and Cys533–Cys560. Residues 580-583 (KDEL) carry the Prevents secretion from ER motif.

As to quaternary structure, heterodimer of a catalytic subunit alpha and a subunit beta.

The protein resides in the endoplasmic reticulum. Its function is as follows. Subunit of glucosidase 2, which cleaves sequentially the 2 innermost alpha-1,3-linked glucose residues from the Glc(2)Man(9)GlcNAc(2) oligosaccharide precursor of immature glycoproteins in the endoplasmic reticulum (ER). Specifically required for the cleavage of the final glucose. The subunit beta retains the catalytic subunit alpha in the ER. This chain is Glucosidase 2 subunit beta, found in Mycosarcoma maydis (Corn smut fungus).